The chain runs to 208 residues: N-(5'-phosphoribosyl)anthranilate isomerase (208 aa).

Belongs to the TrpF family.

The catalysed reaction is N-(5-phospho-beta-D-ribosyl)anthranilate = 1-(2-carboxyphenylamino)-1-deoxy-D-ribulose 5-phosphate. The protein operates within amino-acid biosynthesis; L-tryptophan biosynthesis; L-tryptophan from chorismate: step 3/5. This chain is N-(5'-phosphoribosyl)anthranilate isomerase, found in Chlamydia trachomatis serovar A (strain ATCC VR-571B / DSM 19440 / HAR-13).